A 399-amino-acid polypeptide reads, in one-letter code: Arginase (399 aa).

Residues H193, D216, H218, and D220 each coordinate Mn(2+). Substrate-binding positions include 218 to 222 (HADIN), 229 to 231 (SGN), and D273. Mn(2+) contacts are provided by D322 and D324. T336 and E367 together coordinate substrate.

It belongs to the arginase family. It depends on Mn(2+) as a cofactor.

The protein localises to the cytoplasm. The catalysed reaction is L-arginine + H2O = urea + L-ornithine. It functions in the pathway nitrogen metabolism; urea cycle; L-ornithine and urea from L-arginine: step 1/1. The polypeptide is Arginase (CAR1) (Eremothecium gossypii (strain ATCC 10895 / CBS 109.51 / FGSC 9923 / NRRL Y-1056) (Yeast)).